A 477-amino-acid polypeptide reads, in one-letter code: M-phase inducer phosphatase 3 (477 aa).

Residues 1 to 20 (MSAEFFSSKREEGSLASGPS) form a disordered region. Ser2 is subject to N-acetylserine. A phosphoserine mark is found at Ser20 and Ser38. Position 48 is a phosphothreonine; by CDK1 (Thr48). A phosphoserine mark is found at Ser58, Ser62, and Ser65. Phosphothreonine; by CDK1 is present on Thr68. Phosphoserine; by CDK1 is present on Ser123. Ser130 carries the phosphoserine modification. Phosphothreonine is present on Thr131. Ser169 carries the phosphoserine; by CDK1 modification. 2 positions are modified to phosphoserine; by PLK3: Ser192 and Ser199. Phosphoserine; by CDK1 is present on Ser218. A Phosphoserine; by CHEK1, CHEK2, BRSK1, MAPK14 AND MARK3 modification is found at Ser220. Positions 325–432 (LIEKFYIIDC…FFPEYMELCE (108 aa)) constitute a Rhodanese domain. Cys381 is an active-site residue. Ser476 carries the post-translational modification Phosphoserine.

This sequence belongs to the MPI phosphatase family. As to quaternary structure, interacts with MAPK14 and 14-3-3 proteins. When phosphorylated on Ser-130 and/or Thr-131, interacts with PLK1. Interacts with MARK3/C-TAK1. Post-translationally, phosphorylated by CHEK1 and MAPK14 at Ser-220. This phosphorylation creates a binding site for 14-3-3 protein and inhibits the phosphatase. Phosphorylated by PLK4. Phosphorylated by PLK1, leading to activate the phosphatase activity. Phosphorylation by PLK3 at Ser-192 promotes nuclear translocation. Ser-199 is a minor phosphorylation site. Phosphorylation by CDK1 occurs at G2 and G2-M transition and leads to increased activity.

It is found in the nucleus. It carries out the reaction O-phospho-L-tyrosyl-[protein] + H2O = L-tyrosyl-[protein] + phosphate. Its function is as follows. Functions as a dosage-dependent inducer in mitotic control. Tyrosine protein phosphatase required for progression of the cell cycle. When phosphorylated, highly effective in activating G2 cells into prophase. Directly dephosphorylates CDK1 and activates its kinase activity. This Bos taurus (Bovine) protein is M-phase inducer phosphatase 3 (CDC25C).